Here is a 382-residue protein sequence, read N- to C-terminus: V-set and immunoglobulin domain-containing protein 1 (382 aa).

Residues 1-21 (MGLTFWKVFLILNCLAGQVNG) form the signal peptide. The Ig-like V-type domain maps to 22–133 (VQVTIPDSFV…FFGKNQGTIS (112 aa)). The Extracellular portion of the chain corresponds to 22-234 (VQVTIPDSFV…DLTTPYPGIG (213 aa)). N-linked (GlcNAc...) asparagine glycosylation occurs at N32. 2 cysteine pairs are disulfide-bonded: C43–C116 and C161–C211. The Ig-like C2-type domain maps to 140 to 227 (PSKPFCSIQG…GNSSCEIDLT (88 aa)). N-linked (GlcNAc...) asparagine glycans are attached at residues N200 and N219. Residues 235–255 (IIVGAFVGTLIGVIIIISVVW) traverse the membrane as a helical segment. Topologically, residues 256-382 (FVRRKVKAKG…FCDEEKVIKP (127 aa)) are cytoplasmic. A disordered region spans residues 266-382 (KERKRNSKTT…FCDEEKVIKP (117 aa)). A compositionally biased stretch (polar residues) spans 273–285 (KTTTELEPMTKIN). Over residues 286 to 298 (QRTEGETMPREDA) the composition is skewed to basic and acidic residues. The segment covering 327-341 (EPEPALQPTVEPPSG) has biased composition (pro residues).

The protein localises to the membrane. The polypeptide is V-set and immunoglobulin domain-containing protein 1 (VSIG1) (Bos taurus (Bovine)).